Here is a 141-residue protein sequence, read N- to C-terminus: Hemoglobin subunit alpha (141 aa).

The region spanning 1-141 is the Globin domain; sequence VLSADDKANV…VSTVLTSKYR (141 aa). At serine 3 the chain carries Phosphoserine. Residues lysine 7 and lysine 11 each carry the N6-succinyllysine modification. Lysine 16 is modified (N6-acetyllysine; alternate). An N6-succinyllysine; alternate modification is found at lysine 16. Tyrosine 24 carries the post-translational modification Phosphotyrosine. Residue serine 35 is modified to Phosphoserine. Lysine 40 carries the N6-succinyllysine modification. At serine 49 the chain carries Phosphoserine. Histidine 58 is a binding site for O2. Residue histidine 87 coordinates heme b. Residue serine 102 is modified to Phosphoserine. Threonine 108 carries the phosphothreonine modification. Serine 124 and serine 131 each carry phosphoserine. A phosphothreonine mark is found at threonine 134 and threonine 137. Serine 138 bears the Phosphoserine mark.

Belongs to the globin family. In terms of assembly, heterotetramer of two alpha chains and two beta chains. In terms of tissue distribution, red blood cells.

Functionally, involved in oxygen transport from the lung to the various peripheral tissues. The chain is Hemoglobin subunit alpha from Peromyscus californicus (California mouse).